Here is a 565-residue protein sequence, read N- to C-terminus: Urocanate hydratase (565 aa).

NAD(+) contacts are provided by residues Gly-58–Gly-59, Gln-136, Gly-182–Gly-184, Glu-202, Arg-207, Asn-245–Ala-246, Gln-266–His-270, Tyr-276–Leu-277, and Tyr-325. The active site involves Cys-413. Gly-495 provides a ligand contact to NAD(+).

The protein belongs to the urocanase family. It depends on NAD(+) as a cofactor.

The protein resides in the cytoplasm. It carries out the reaction 4-imidazolone-5-propanoate = trans-urocanate + H2O. It participates in amino-acid degradation; L-histidine degradation into L-glutamate; N-formimidoyl-L-glutamate from L-histidine: step 2/3. Its function is as follows. Catalyzes the conversion of urocanate to 4-imidazolone-5-propionate. The chain is Urocanate hydratase from Vibrio vulnificus (strain YJ016).